Reading from the N-terminus, the 662-residue chain is Probable quinol oxidase subunit 1 (662 aa).

Helical transmembrane passes span 14-34 (WMIT…IAVI) and 58-78 (VMYL…ALLI). H102 contacts Fe(II)-heme a. Transmembrane regions (helical) follow at residues 103–123 (GVIM…NIVV), 140–160 (VSFW…IIGG), 187–207 (IAIQ…FVTI), 228–248 (FITT…LALM), 273–293 (FFWV…FGIY), 311–331 (MVWA…HHFF), 336–356 (GALI…PTGV), and 376–396 (MLFS…GVML). Cu cation is bound by residues H279, Y283, H328, and H329. Positions 279–283 (HPEVY) form a cross-link, 1'-histidyl-3'-tyrosine (His-Tyr). H414 contacts heme a3. The next 5 membrane-spanning stretches (helical) occupy residues 415 to 435 (FHYT…IFWY), 451 to 471 (CFWF…ILGL), 493 to 513 (ISTI…VSIV), 587 to 604 (PVGF…FFLI), and 608 to 627 (VIPA…YRSF). Residue H416 coordinates Fe(II)-heme a.

Belongs to the heme-copper respiratory oxidase family. It depends on Cu cation as a cofactor. Ferriheme a serves as cofactor. Requires Heme A3. as cofactor.

It is found in the cell membrane. It catalyses the reaction 2 a quinol + O2 = 2 a quinone + 2 H2O. The protein operates within energy metabolism; oxidative phosphorylation. Catalyzes quinol oxidation with the concomitant reduction of oxygen to water. The chain is Probable quinol oxidase subunit 1 (qoxB) from Staphylococcus aureus (strain COL).